We begin with the raw amino-acid sequence, 273 residues long: N-alpha-acetyltransferase 30 (273 aa).

Disordered regions lie at residues 1–39 (MADA…HQLN) and 62–85 (QKTR…PNGL). The 149-residue stretch at 125–273 (RYVRYESELQ…DALRLKLWLR (149 aa)) folds into the N-acetyltransferase domain.

This sequence belongs to the acetyltransferase family. MAK3 subfamily. As to quaternary structure, component of the N-terminal acetyltransferase C (NatC) complex.

Its subcellular location is the cytoplasm. It localises to the nucleus. It carries out the reaction N-terminal L-methionyl-L-leucyl-[protein] + acetyl-CoA = N-terminal N(alpha)-acetyl-L-methionyl-L-leucyl-[protein] + CoA + H(+). It catalyses the reaction N-terminal L-methionyl-L-isoleucyl-[protein] + acetyl-CoA = N-terminal N(alpha)-acetyl-L-methionyl-L-isoleucyl-[protein] + CoA + H(+). The catalysed reaction is N-terminal L-methionyl-L-phenylalanyl-[protein] + acetyl-CoA = N-terminal N(alpha)-acetyl-L-methionyl-L-phenylalanyl-[protein] + CoA + H(+). The enzyme catalyses N-terminal L-methionyl-L-tryptophyl-[protein] + acetyl-CoA = N-terminal N(alpha)-acetyl-L-methionyl-L-tryptophyl-[protein] + CoA + H(+). It carries out the reaction N-terminal L-methionyl-L-tyrosyl-[protein] + acetyl-CoA = N-terminal N(alpha)-acetyl-L-methionyl-L-tyrosyl-[protein] + CoA + H(+). Functionally, catalytic subunit of the N-terminal acetyltransferase C (NatC) complex. Catalyzes acetylation of the N-terminal methionine residues of peptides beginning with Met-Leu-Ala and Met-Leu-Gly. N-terminal acetylation protects proteins from ubiquitination and degradation by the N-end rule pathway. The protein is N-alpha-acetyltransferase 30 (naa30) of Xenopus laevis (African clawed frog).